The following is a 403-amino-acid chain: Queuine tRNA-ribosyltransferase catalytic subunit 1 (403 aa).

At A2 the chain carries N-acetylalanine. The active-site Proton acceptor is the D105. 105–109 (DSGGF) contacts queuine. Residue S139 is modified to Phosphoserine. 3 residues coordinate queuine: D159, Q202, and G229. Residues 260-266 (GVGYATD) form an RNA binding region. The active-site Nucleophile is the D279. An RNA binding; important for wobble base 34 recognition region spans residues 284 to 288 (TRTAR). Residues C317, C319, C322, and H348 each coordinate Zn(2+).

This sequence belongs to the queuine tRNA-ribosyltransferase family. Heterodimer of a catalytic subunit QTRT1 and an accessory subunit QTRT2. Requires Zn(2+) as cofactor. In terms of tissue distribution, expressed in brain, heart, kidney, liver, ling, skeletal muscle, spleen and testis.

The protein localises to the cytoplasm. It is found in the mitochondrion outer membrane. Its subcellular location is the nucleus. The catalysed reaction is guanosine(34) in tRNA + queuine = queuosine(34) in tRNA + guanine. Functionally, catalytic subunit of the queuine tRNA-ribosyltransferase (TGT) that catalyzes the base-exchange of a guanine (G) residue with queuine (Q) at position 34 (anticodon wobble position) in tRNAs with GU(N) anticodons (tRNA-Asp, -Asn, -His and -Tyr), resulting in the hypermodified nucleoside queuosine (7-(((4,5-cis-dihydroxy-2-cyclopenten-1-yl)amino)methyl)-7-deazaguanosine). Catalysis occurs through a double-displacement mechanism. The nucleophile active site attacks the C1' of nucleotide 34 to detach the guanine base from the RNA, forming a covalent enzyme-RNA intermediate. The proton acceptor active site deprotonates the incoming queuine, allowing a nucleophilic attack on the C1' of the ribose to form the product. Modification of cytoplasmic tRNAs with queuosine controls the elongation speed of cognate codons, thereby ensuring the correct folding of nascent proteins to maintain proteome integrity. The chain is Queuine tRNA-ribosyltransferase catalytic subunit 1 from Mus musculus (Mouse).